We begin with the raw amino-acid sequence, 125 residues long: Holo-[acyl-carrier-protein] synthase (125 aa).

Aspartate 8 and glutamate 57 together coordinate Mg(2+).

It belongs to the P-Pant transferase superfamily. AcpS family. It depends on Mg(2+) as a cofactor.

The protein resides in the cytoplasm. It catalyses the reaction apo-[ACP] + CoA = holo-[ACP] + adenosine 3',5'-bisphosphate + H(+). Functionally, transfers the 4'-phosphopantetheine moiety from coenzyme A to a Ser of acyl-carrier-protein. The chain is Holo-[acyl-carrier-protein] synthase from Neisseria gonorrhoeae (strain ATCC 700825 / FA 1090).